Reading from the N-terminus, the 278-residue chain is Glutamate racemase (278 aa).

Substrate-binding positions include 13–14 and 45–46; these read DS and YG. The active-site Proton donor/acceptor is the C76. 77–78 is a substrate binding site; it reads NT. Catalysis depends on C185, which acts as the Proton donor/acceptor. 186-187 is a binding site for substrate; sequence TH.

Belongs to the aspartate/glutamate racemases family.

It catalyses the reaction L-glutamate = D-glutamate. The protein operates within cell wall biogenesis; peptidoglycan biosynthesis. Functionally, provides the (R)-glutamate required for cell wall biosynthesis. This chain is Glutamate racemase, found in Gloeothece citriformis (strain PCC 7424) (Cyanothece sp. (strain PCC 7424)).